The following is a 124-amino-acid chain: Large ribosomal subunit protein bL12 (124 aa).

It belongs to the bacterial ribosomal protein bL12 family. Homodimer. Part of the ribosomal stalk of the 50S ribosomal subunit. Forms a multimeric L10(L12)X complex, where L10 forms an elongated spine to which 2 to 4 L12 dimers bind in a sequential fashion. Binds GTP-bound translation factors.

Functionally, forms part of the ribosomal stalk which helps the ribosome interact with GTP-bound translation factors. Is thus essential for accurate translation. The chain is Large ribosomal subunit protein bL12 from Borreliella burgdorferi (strain ATCC 35210 / DSM 4680 / CIP 102532 / B31) (Borrelia burgdorferi).